Here is a 252-residue protein sequence, read N- to C-terminus: MADSVLRIGGREFGSRLIMGTGGAPNLSVLEEALIASGTELTTVAMRRVDAETGTGVLDLLNRLGIAALPNTAGCRGAAEAVLTAQLAREALGTDMVKLEVIADERTLLPDAVELVKAAEQLVDDGFTVLPYTNDDPVLARRLEDIGCAAVMPLGSPIGTGLGISNPHNIEMIVAAAGVPVVLDAGIGTASDAALAMELGCDAVLLATAVTRASDPPTMAAAMASAVTAGHLARQAGRIPKRFWAQASSPAL.

The active-site Schiff-base intermediate with DXP is Lys98. 1-deoxy-D-xylulose 5-phosphate-binding positions include Gly159, 185–186, and 207–208; these read AG and AT.

It belongs to the ThiG family. Homotetramer. Forms heterodimers with either ThiH or ThiS.

The protein resides in the cytoplasm. It catalyses the reaction [ThiS sulfur-carrier protein]-C-terminal-Gly-aminoethanethioate + 2-iminoacetate + 1-deoxy-D-xylulose 5-phosphate = [ThiS sulfur-carrier protein]-C-terminal Gly-Gly + 2-[(2R,5Z)-2-carboxy-4-methylthiazol-5(2H)-ylidene]ethyl phosphate + 2 H2O + H(+). It participates in cofactor biosynthesis; thiamine diphosphate biosynthesis. Functionally, catalyzes the rearrangement of 1-deoxy-D-xylulose 5-phosphate (DXP) to produce the thiazole phosphate moiety of thiamine. Sulfur is provided by the thiocarboxylate moiety of the carrier protein ThiS. In vitro, sulfur can be provided by H(2)S. This chain is Thiazole synthase, found in Mycolicibacterium smegmatis (strain ATCC 700084 / mc(2)155) (Mycobacterium smegmatis).